We begin with the raw amino-acid sequence, 248 residues long: Chromatin target of PRMT1 protein (248 aa).

Ala2 carries the N-acetylalanine modification. Residue Thr33 is modified to Phosphothreonine. Phosphoserine occurs at positions 40, 49, and 64. Lys70 is covalently cross-linked (Glycyl lysine isopeptide (Lys-Gly) (interchain with G-Cter in SUMO2)). The segment at 151–204 (LRRGGVRGRGGPGRGGLGRGAMGRGGIGGRGRGMIGRGRGGFGGRGRGRGRGRG) is disordered. An interaction with PRMT1 region spans residues 153 to 206 (RGGVRGRGGPGRGGLGRGAMGRGGIGGRGRGMIGRGRGGFGGRGRGRGRGRGAL). Residues 157–195 (RGRGGPGRGGLGRGAMGRGGIGGRGRGMIGRGRGGFGGR) show a composition bias toward gly residues. Residues 194–203 (GRGRGRGRGR) carry the GAR motif; involved in 5hmC binding motif. Thr242 is subject to Phosphothreonine.

Interacts with PRMT1 and PRMT5. Interacts with the 5FMC complex; the interaction is methylation-dependent. Interacts with FYTTD1, SET and PRC1 complex members CBX4, RNF2 and PHC2; the interactions are methylation-independent. Interacts with ZNF148. Component of the transcription/export (TREX) complex at least composed of ALYREF/THOC4, DDX39B, SARNP/CIP29, CHTOP and the THO subcomplex; TREX seems to have dynamic structure involving ATP-dependent remodeling; in the complex interacts (methylated) with ALYREF/THOC4 and with DDX39B in a methylation-independent manner. Interacts (methylated) with NXF1; the interaction is mutually exclusive with the NXF1:THOC5 interaction. Interacts with WDR77 and ERH. Post-translationally, asymmetrically methylated by PRMT1. Symmetrically methylated by PRMT5. As to expression, expressed in an erythroid progenitor cell line derived from peripheral blood. Expressed in glioblastoma cells.

It is found in the nucleus. Its subcellular location is the nucleolus. It localises to the nucleoplasm. The protein resides in the nucleus speckle. Functionally, plays an important role in the ligand-dependent activation of estrogen receptor target genes. May play a role in the silencing of fetal globin genes. Recruits the 5FMC complex to ZNF148, leading to desumoylation of ZNF148 and subsequent transactivation of ZNF148 target genes. Plays an important role in the tumorigenicity of glioblastoma cells. Binds to 5-hydroxymethylcytosine (5hmC) and associates with the methylosome complex containing PRMT1, PRMT5, MEP50 and ERH. The CHTOP-methylosome complex associated with 5hmC is recruited to selective sites on the chromosome, where it methylates H4R3 and activates the transcription of genes involved in glioblastomagenesis. Its function is as follows. Required for effective mRNA nuclear export and is a component of the TREX complex which is thought to couple mRNA transcription, processing and nuclear export, and specifically associates with spliced mRNA and not with unspliced pre-mRNA. TREX is recruited to spliced mRNAs by a transcription-independent mechanism, binds to mRNA upstream of the exon-junction complex (EJC) and is recruited in a splicing- and cap-dependent manner to a region near the 5' end of the mRNA where it functions in mRNA export to the cytoplasm via the TAP/NFX1 pathway. The TREX complex is essential for the export of Kaposi's sarcoma-associated herpesvirus (KSHV) intronless mRNAs and infectious virus production. Stimulates DDX39B ATPase and helicase activities. In cooperation with ALYREF/THOC4 enhances NXF1 RNA binding activity. The polypeptide is Chromatin target of PRMT1 protein (CHTOP) (Homo sapiens (Human)).